Consider the following 337-residue polypeptide: Protein RETICULATA-RELATED 3, chloroplastic (337 aa).

The N-terminal 59 residues, methionine 1–cysteine 59, are a transit peptide targeting the chloroplast. Gly residues predominate over residues asparagine 70 to glycine 89. The disordered stretch occupies residues asparagine 70–serine 96. The next 2 membrane-spanning stretches (helical) occupy residues phenylalanine 151–alanine 171 and valine 216–isoleucine 236.

Belongs to the RETICULATA family. As to expression, expressed in root meristem, root vasculature, distal region of young leaf primordia, leaf bundle sheath cells, hydathodes and pollen grains.

It is found in the plastid. Its subcellular location is the chloroplast membrane. Its function is as follows. May play a role in leaf development. Required for leaf mesophyll cell division in the early stages of leaf organogenesis. The protein is Protein RETICULATA-RELATED 3, chloroplastic of Arabidopsis thaliana (Mouse-ear cress).